Here is a 352-residue protein sequence, read N- to C-terminus: Probable transcription factor At1g11510 (352 aa).

Disordered regions lie at residues 1 to 132 (MSRR…GGEE) and 239 to 269 (MKSN…KNNC). Residues 56–66 (SGSDEETDSDS) show a composition bias toward acidic residues. Composition is skewed to basic and acidic residues over residues 89–101 (KTSE…RSLE), 117–132 (VSGE…GGEE), and 241–259 (SNEK…HELD).

Belongs to the GeBP family.

This is Probable transcription factor At1g11510 from Arabidopsis thaliana (Mouse-ear cress).